The following is an 84-amino-acid chain: Small ribosomal subunit protein uS17 (84 aa).

The protein belongs to the universal ribosomal protein uS17 family. As to quaternary structure, part of the 30S ribosomal subunit.

One of the primary rRNA binding proteins, it binds specifically to the 5'-end of 16S ribosomal RNA. The chain is Small ribosomal subunit protein uS17 from Glaesserella parasuis serovar 5 (strain SH0165) (Haemophilus parasuis).